Reading from the N-terminus, the 500-residue chain is MKFLAVLLAAGMLAFLGAVICIIASVPLAASPARALPGGADNASVASGAAASPGPQRSLSALHGAGGSAGPPALPGAPAASAHPLPPGPLFSRFLCTPLAAACPSGAQQGDAAGAAPGEREELLLLQSTAEQLRQTALQQEARIRADQDTIRELTGKLGRCESGLPRGLQGAGPRRDTMADGPWDSPALILELEDAVRALRDRIDRLEQELPARVNLSAAPAPVSAVPTGLHSKMDQLEGQLLAQVLALEKERVALSHSSRRQRQEVEKELDVLQGRVAELEHGSSAYSPPDAFKISIPIRNNYMYARVRKALPELYAFTACMWLRSRSSGTGQGTPFSYSVPGQANEIVLLEAGHEPMELLINDKVAQLPLSLKDNGWHHICIAWTTRDGLWSAYQDGELQGSGENLAAWHPIKPHGILILGQEQDTLGGRFDATQAFVGDIAQFNLWDHALTPAQVLGIANCTAPLLGNVLPWEDKLVEAFGGATKAAFDVCKGRAKA.

The Cytoplasmic segment spans residues 1 to 2; the sequence is MK. A helical; Signal-anchor for type II membrane protein transmembrane segment spans residues 3–23; it reads FLAVLLAAGMLAFLGAVICII. Residues 24–500 are Extracellular-facing; the sequence is ASVPLAASPA…FDVCKGRAKA (477 aa). Asn42 carries an N-linked (GlcNAc...) asparagine glycan. Low complexity predominate over residues 42–63; that stretch reads NASVASGAAASPGPQRSLSALH. Disordered stretches follow at residues 42 to 81 and 162 to 183; these read NASVASGAAASPGPQRSLSALHGAGGSAGPPALPGAPAAS and ESGLPRGLQGAGPRRDTMADGP. N-linked (GlcNAc...) asparagine glycosylation is present at Asn216. Residues 292–494 enclose the Pentraxin (PTX) domain; that stretch reads DAFKISIPIR…GATKAAFDVC (203 aa). An intrachain disulfide couples Cys322 to Cys383. Asn347, Glu425, Gln426, Asp427, and Gln437 together coordinate Ca(2+). Asn463 carries an N-linked (GlcNAc...) asparagine glycan.

As to quaternary structure, heteropentamer with NPTX1 and/or NPTX2. Also binds taipoxin-associated calcium-binding protein 49 (TCBP49/RCN2). Interacts with KLHL2. Requires Ca(2+) as cofactor. In terms of processing, ubiquitinated by a cullin-RING-based BCR (BTB-CUL3-RBX1) E3 ubiquitin-protein ligase complex containing KLHL2.

Its subcellular location is the membrane. Its function is as follows. May be involved in mediating uptake of synaptic material during synapse remodeling or in mediating the synaptic clustering of AMPA glutamate receptors at a subset of excitatory synapses. This chain is Neuronal pentraxin receptor (NPTXR), found in Homo sapiens (Human).